The primary structure comprises 60 residues: UPF0337 protein asr1134 (60 aa).

2 stretches are compositionally biased toward basic and acidic residues: residues 1–18 and 29–60; these read MSLEDRAKATGKNIEGKA and PEDKAEGKAKQAESEVRHGVEDVKDNVKKKID. Positions 1–60 are disordered; it reads MSLEDRAKATGKNIEGKAQEALGNVTGDPEDKAEGKAKQAESEVRHGVEDVKDNVKKKID.

It belongs to the UPF0337 (CsbD) family.

In Nostoc sp. (strain PCC 7120 / SAG 25.82 / UTEX 2576), this protein is UPF0337 protein asr1134.